The sequence spans 265 residues: Probable cell division protein kinase ECU08_0230 (265 aa).

The Protein kinase domain occupies 4 to 263 (YILGALIGSG…IMEILENEYG (260 aa)). Residues 10–18 (IGSGTYGEV) and Lys-33 contribute to the ATP site. Catalysis depends on Asp-121, which acts as the Proton acceptor.

It belongs to the protein kinase superfamily. CMGC Ser/Thr protein kinase family. CDC2/CDKX subfamily.

The protein localises to the nucleus. The catalysed reaction is L-seryl-[protein] + ATP = O-phospho-L-seryl-[protein] + ADP + H(+). It catalyses the reaction L-threonyl-[protein] + ATP = O-phospho-L-threonyl-[protein] + ADP + H(+). May play a role in the control of the eukaryotic cell cycle. This is Probable cell division protein kinase ECU08_0230 from Encephalitozoon cuniculi (strain GB-M1) (Microsporidian parasite).